A 525-amino-acid polypeptide reads, in one-letter code: ATP synthase subunit alpha (525 aa).

171 to 178 contacts ATP; the sequence is GDRQTGKS.

The protein belongs to the ATPase alpha/beta chains family. As to quaternary structure, F-type ATPases have 2 components, CF(1) - the catalytic core - and CF(0) - the membrane proton channel. CF(1) has five subunits: alpha(3), beta(3), gamma(1), delta(1), epsilon(1). CF(0) has three main subunits: a(1), b(2) and c(9-12). The alpha and beta chains form an alternating ring which encloses part of the gamma chain. CF(1) is attached to CF(0) by a central stalk formed by the gamma and epsilon chains, while a peripheral stalk is formed by the delta and b chains.

The protein resides in the cell inner membrane. The catalysed reaction is ATP + H2O + 4 H(+)(in) = ADP + phosphate + 5 H(+)(out). In terms of biological role, produces ATP from ADP in the presence of a proton gradient across the membrane. The alpha chain is a regulatory subunit. The polypeptide is ATP synthase subunit alpha (Flavobacterium psychrophilum (strain ATCC 49511 / DSM 21280 / CIP 103535 / JIP02/86)).